A 334-amino-acid chain; its full sequence is Adenosine deaminase (334 aa).

The Zn(2+) site is built by H12 and H14. Substrate contacts are provided by H14, D16, and G170. A Zn(2+)-binding site is contributed by H197. The active-site Proton donor is E200. Position 278 (D278) interacts with Zn(2+). D279 lines the substrate pocket.

It belongs to the metallo-dependent hydrolases superfamily. Adenosine and AMP deaminases family. Adenosine deaminase subfamily. Zn(2+) is required as a cofactor.

The enzyme catalyses adenosine + H2O + H(+) = inosine + NH4(+). It catalyses the reaction 2'-deoxyadenosine + H2O + H(+) = 2'-deoxyinosine + NH4(+). Catalyzes the hydrolytic deamination of adenosine and 2-deoxyadenosine. The protein is Adenosine deaminase of Yersinia pseudotuberculosis serotype O:1b (strain IP 31758).